The primary structure comprises 288 residues: ATP synthase gamma chain (288 aa).

Belongs to the ATPase gamma chain family. F-type ATPases have 2 components, CF(1) - the catalytic core - and CF(0) - the membrane proton channel. CF(1) has five subunits: alpha(3), beta(3), gamma(1), delta(1), epsilon(1). CF(0) has three main subunits: a, b and c.

The protein localises to the cell inner membrane. Produces ATP from ADP in the presence of a proton gradient across the membrane. The gamma chain is believed to be important in regulating ATPase activity and the flow of protons through the CF(0) complex. This is ATP synthase gamma chain from Actinobacillus pleuropneumoniae serotype 5b (strain L20).